Consider the following 532-residue polypeptide: BEL1-like homeodomain protein 6 (532 aa).

Positions 144-160 are SR/KY domain; the sequence is SKYLKAAQQLLDEAVNV. The interval 170-203 is disordered; that stretch reads EGDKNNENPQEPNQSTQDSSTNPPADISQSERQE. The span at 176–197 shows a compositional bias: polar residues; that stretch reads ENPQEPNQSTQDSSTNPPADIS. The BELL domain stretch occupies residues 200–271; sequence ERQEMQSKLT…SLRDAISGQI (72 aa). The homeobox DNA-binding region spans 314 to 376; that stretch reads AWRPQRGLPE…NARVRLWKPM (63 aa). The disordered stretch occupies residues 385–434; that stretch reads FTENDSNSSSENTPKMSEIGPVAADDEDRAREFSQDQTKPDHGHGYGEET. Residues 412–434 are compositionally biased toward basic and acidic residues; sequence DRAREFSQDQTKPDHGHGYGEET.

It belongs to the TALE/BELL homeobox family. As to quaternary structure, may form heterodimeric complexes with TALE/KNOX proteins. Interacts with OFP2, OFP4, and OFP5.

It is found in the nucleus. This is BEL1-like homeodomain protein 6 (BLH6) from Arabidopsis thaliana (Mouse-ear cress).